A 448-amino-acid polypeptide reads, in one-letter code: Protein Z-dependent protease inhibitor (448 aa).

A signal peptide spans 1–21 (MRVASSLFLPVLLTEVWLVTS). A disordered region spans residues 33-70 (VHLESQDYENQTWEEYTRTDPREEEEEEEEKEEGKDEE). Acidic residues predominate over residues 54–63 (REEEEEEEEK). An N-linked (GlcNAc...) asparagine glycan is attached at N81. A heparin-binding region spans residues 140–157 (AGPLILPALFKKVKETFS). N-linked (GlcNAc...) asparagine glycosylation is found at N184, N278, and N299.

The protein belongs to the serpin family. Phosphorylated by FAM20C in the extracellular medium. Detectable in liver, but not in heart, brain, spleen, lung, kidney, skeletal muscle or testes.

It is found in the secreted. Inhibits activity of the coagulation protease factor Xa in the presence of PROZ, calcium and phospholipids. Also inhibits factor XIa in the absence of cofactors. The sequence is that of Protein Z-dependent protease inhibitor (Serpina10) from Mus musculus (Mouse).